The primary structure comprises 186 residues: Peptidyl-tRNA hydrolase (186 aa).

Tyr-14 contributes to the tRNA binding site. The active-site Proton acceptor is the His-19. 3 residues coordinate tRNA: Tyr-64, Asn-66, and Asn-113.

The protein belongs to the PTH family. Monomer.

It localises to the cytoplasm. The catalysed reaction is an N-acyl-L-alpha-aminoacyl-tRNA + H2O = an N-acyl-L-amino acid + a tRNA + H(+). Its function is as follows. Hydrolyzes ribosome-free peptidyl-tRNAs (with 1 or more amino acids incorporated), which drop off the ribosome during protein synthesis, or as a result of ribosome stalling. Functionally, catalyzes the release of premature peptidyl moieties from peptidyl-tRNA molecules trapped in stalled 50S ribosomal subunits, and thus maintains levels of free tRNAs and 50S ribosomes. The chain is Peptidyl-tRNA hydrolase from Agathobacter rectalis (strain ATCC 33656 / DSM 3377 / JCM 17463 / KCTC 5835 / VPI 0990) (Eubacterium rectale).